The chain runs to 71 residues: Small integral membrane protein 31 (71 aa).

A helical membrane pass occupies residues 8-28 (LEMAFILLAFVIFSLFTLASI). Positions 31-71 (TPDDSNEEEEHEKKGREKKRKKSEKKKNCSEEEHRIEAVEL) are disordered. Positions 46–55 (REKKRKKSEK) are enriched in basic residues. The span at 56-71 (KKNCSEEEHRIEAVEL) shows a compositional bias: basic and acidic residues. The N-linked (GlcNAc...) asparagine glycan is linked to Asn-58.

Its subcellular location is the membrane. This chain is Small integral membrane protein 31, found in Homo sapiens (Human).